Consider the following 118-residue polypeptide: Beta-2-microglobulin (118 aa).

An N-terminal signal peptide occupies residues 1-20 (MAVSAALVLLGLLSLSGLDA). The Ig-like C1-type domain maps to 25 to 112 (PEVQVYSRHP…HVTLTQPKIV (88 aa)). C45 and C99 are oxidised to a cystine.

It belongs to the beta-2-microglobulin family. Heterodimer of an alpha chain and a beta chain. Beta-2-microglobulin is the beta-chain of major histocompatibility complex class I molecules.

It is found in the secreted. Functionally, component of the class I major histocompatibility complex (MHC). Involved in the presentation of peptide antigens to the immune system. This chain is Beta-2-microglobulin (B2M), found in Ovis aries (Sheep).